The primary structure comprises 512 residues: Histidine ammonia-lyase (512 aa).

Positions 142-144 (ASG) form a cross-link, 5-imidazolinone (Ala-Gly). The residue at position 143 (serine 143) is a 2,3-didehydroalanine (Ser).

Belongs to the PAL/histidase family. Contains an active site 4-methylidene-imidazol-5-one (MIO), which is formed autocatalytically by cyclization and dehydration of residues Ala-Ser-Gly.

The protein localises to the cytoplasm. It catalyses the reaction L-histidine = trans-urocanate + NH4(+). Its pathway is amino-acid degradation; L-histidine degradation into L-glutamate; N-formimidoyl-L-glutamate from L-histidine: step 1/3. This chain is Histidine ammonia-lyase, found in Allorhizobium ampelinum (strain ATCC BAA-846 / DSM 112012 / S4) (Agrobacterium vitis (strain S4)).